We begin with the raw amino-acid sequence, 83 residues long: Probable calcium-binding protein CML28 (83 aa).

2 EF-hand domains span residues 5-40 (TEKAEHDRIFKKFDANGDGKISAAELGDALKNLGSV) and 43-75 (EDIKRMMAEIDTDGDGYISYQEFIDFASANRGL). Residues D18, N20, D22, K24, E29, D53, D55, D57, Y59, and E64 each contribute to the Ca(2+) site.

Functionally, potential calcium sensor. In Arabidopsis thaliana (Mouse-ear cress), this protein is Probable calcium-binding protein CML28 (CML28).